Here is a 1120-residue protein sequence, read N- to C-terminus: Transcription-repair-coupling factor (1120 aa).

Residues aspartate 591–isoleucine 756 form the Helicase ATP-binding domain. Glycine 604–threonine 611 contributes to the ATP binding site. The short motif at aspartate 709–glutamine 712 is the DEEQ box element. The Helicase C-terminal domain occupies isoleucine 777 to aspartate 931.

It in the N-terminal section; belongs to the UvrB family. In the C-terminal section; belongs to the helicase family. RecG subfamily.

The protein localises to the cytoplasm. In terms of biological role, couples transcription and DNA repair by recognizing RNA polymerase (RNAP) stalled at DNA lesions. Mediates ATP-dependent release of RNAP and its truncated transcript from the DNA, and recruitment of nucleotide excision repair machinery to the damaged site. This Rickettsia bellii (strain RML369-C) protein is Transcription-repair-coupling factor.